A 173-amino-acid polypeptide reads, in one-letter code: Alpha-crystallin A chain (173 aa).

An N-acetylmethionine modification is found at M1. The segment at 1–63 (MDVTIQHPWF…RTVLDSGISE (63 aa)) is required for complex formation with BFSP1 and BFSP2. Q6 carries the deamidated glutamine; partial modification. A Phosphoserine modification is found at S45. A Deamidated glutamine; partial modification is found at Q50. The sHSP domain maps to 52 to 162 (LFRTVLDSGI…GPSERAIPVS (111 aa)). An N6-acetyllysine mark is found at K70 and K99. Residues H100, E102, and H107 each contribute to the Zn(2+) site. The interval 145–173 (KVASGLDAGPSERAIPVSREEKPSSAPSS) is disordered. S162 carries O-linked (GlcNAc) serine glycosylation.

Belongs to the small heat shock protein (HSP20) family. In terms of assembly, heteromer composed of three CRYAA and one CRYAB subunits. Zinc coordination is achieved at least by His-100, Glu-102 and His-107. His-100 and Glu-102 come from the same molecule within the oligomer, while His-107 residue is provided by another molecule. Inter-subunit bridging via zinc ions enhances stability, which is crucial as there is no protein turn over in the lens. Can also form homodimers and homotetramers (dimers of dimers) which serve as the building blocks of homooligomers. Part of a complex required for lens intermediate filament formation composed of BFSP1, BFSP2 and CRYAA. Post-translationally, acetylation at Lys-70 may increase chaperone activity. In terms of processing, undergoes age-dependent proteolytical cleavage at the C-terminus.

The protein localises to the cytoplasm. It is found in the nucleus. In terms of biological role, contributes to the transparency and refractive index of the lens. Acts as a chaperone, preventing aggregation of various proteins under a wide range of stress conditions. Required for the correct formation of lens intermediate filaments as part of a complex composed of BFSP1, BFSP2 and CRYAA. The polypeptide is Alpha-crystallin A chain (CRYAA) (Erinaceus europaeus (Western European hedgehog)).